The sequence spans 362 residues: S-adenosylmethionine decarboxylase proenzyme (362 aa).

Residues Glu-13 and Glu-16 contribute to the active site. The active-site Schiff-base intermediate with substrate; via pyruvic acid is Ser-73. A Pyruvic acid (Ser); by autocatalysis modification is found at Ser-73. Cys-87 serves as the catalytic Proton donor; for catalytic activity. Residues Ser-236 and His-249 each act as proton acceptor; for processing activity in the active site.

The protein belongs to the eukaryotic AdoMetDC family. Pyruvate serves as cofactor. In terms of processing, is synthesized initially as an inactive proenzyme. Formation of the active enzyme involves a self-maturation process in which the active site pyruvoyl group is generated from an internal serine residue via an autocatalytic post-translational modification. Two non-identical subunits are generated from the proenzyme in this reaction, and the pyruvate is formed at the N-terminus of the alpha chain, which is derived from the carboxyl end of the proenzyme. The post-translation cleavage follows an unusual pathway, termed non-hydrolytic serinolysis, in which the side chain hydroxyl group of the serine supplies its oxygen atom to form the C-terminus of the beta chain, while the remainder of the serine residue undergoes an oxidative deamination to produce ammonia and the pyruvoyl group blocking the N-terminus of the alpha chain.

The enzyme catalyses S-adenosyl-L-methionine + H(+) = S-adenosyl 3-(methylsulfanyl)propylamine + CO2. The protein operates within amine and polyamine biosynthesis; S-adenosylmethioninamine biosynthesis; S-adenosylmethioninamine from S-adenosyl-L-methionine: step 1/1. This is S-adenosylmethionine decarboxylase proenzyme (SAMDC) from Datura stramonium (Jimsonweed).